A 359-amino-acid polypeptide reads, in one-letter code: 4-galactosyl-N-acetylglucosaminide 3-alpha-L-fucosyltransferase 9 (359 aa).

Residues Met1–Pro11 are Cytoplasmic-facing. The chain crosses the membrane as a helical; Signal-anchor for type II membrane protein span at residues Phe12–Pro32. Over Thr33–Asn359 the chain is Lumenal. An N-linked (GlcNAc...) asparagine glycan is attached at Asn62. Positions Glu63–Tyr168 are acceptor-binding. Residue Gln75 coordinates a beta-D-galactosyl-(1-&gt;4)-N-acetyl-beta-D-glucosaminyl derivative. Cystine bridges form between Cys82-Cys335, Cys91-Cys338, and Cys190-Cys238. N-linked (GlcNAc...) asparagine glycosylation is present at Asn101. Glu137 lines the a beta-D-galactosyl-(1-&gt;4)-N-acetyl-beta-D-glucosaminyl derivative pocket. Glu137 acts as the Nucleophile in catalysis. Glu137 serves as a coordination point for GDP-beta-L-fucose. Asn153 is a glycosylation site (N-linked (GlcNAc...) asparagine). Residues Tyr168, Val192, Ser194, Asn195, Arg202, Val226, Tyr241, Asn246, Tyr252, Glu255, and Lys256 each coordinate GDP-beta-L-fucose. Positions Gly169–Leu326 are donor-binding. The interval Pro327 to Asn359 is acceptor-binding.

This sequence belongs to the glycosyltransferase 10 family. As to quaternary structure, homodimer. N-glycosylated with complex-type N-glycans.

The protein localises to the golgi apparatus. Its subcellular location is the trans-Golgi network membrane. It is found in the golgi apparatus membrane. The enzyme catalyses a beta-D-galactosyl-(1-&gt;4)-N-acetyl-beta-D-glucosaminyl derivative + GDP-beta-L-fucose = a beta-D-galactosyl-(1-&gt;4)-[alpha-L-fucosyl-(1-&gt;3)]-N-acetyl-beta-D-glucosaminyl derivative + GDP + H(+). It carries out the reaction an alpha-Neu5Ac-(2-&gt;3)-beta-D-Gal-(1-&gt;4)-beta-D-GlcNAc-(1-&gt;3)-beta-D-Gal-(1-&gt;4)-beta-D-GlcNAc derivative + GDP-beta-L-fucose = an alpha-Neu5Ac-(2-&gt;3)-beta-D-Gal-(1-&gt;4)-beta-D-GlcNAc-(1-&gt;3)-beta-D-Gal-(1-&gt;4)-[alpha-L-Fuc-(1-&gt;3)]-beta-D-GlcNAc derivative + GDP + H(+). The catalysed reaction is alpha-N-glycoloylneuraminosyl-(2-&gt;3)-beta-D-galactosyl-(1-&gt;4)-N-acetyl-beta-D-glucosaminyl-(1-&gt;3)-beta-D-galactosyl-(1-&gt;4)-N-acetyl-beta-D-glucosaminyl-(1-&gt;3)-beta-D-galactosyl-(1-&gt;4)-beta-D-glucosyl-(1&lt;-&gt;1')-ceramide + GDP-beta-L-fucose = alpha-N-glycoloylneuraminosyl-(2-&gt;3)-beta-D-galactosyl-(1-&gt;4)-N-acetyl-beta-D-glucosaminyl-(1-&gt;3)-beta-D-galactosyl-(1-&gt;4)-[alpha-L-fucosyl-(1-&gt;3)]-N-acetyl-beta-D-glucosaminyl-(1-&gt;3)-beta-D-galactosyl-(1-&gt;4)-beta-D-glucosyl-(1&lt;-&gt;1')-ceramide + GDP + H(+). It catalyses the reaction alpha-D-galactosyl-(1-&gt;3)-beta-D-galactosyl-(1-&gt;4)-N-acetyl-beta-D-glucosaminyl-(1-&gt;3)-beta-D-galactosyl-(1-&gt;4)-beta-D-glucosyl-(1&lt;-&gt;1')-ceramide + GDP-beta-L-fucose = a neolactoside IV(3)-alpha-Gal,III(3)-alpha-Fuc-nLc4Cer + GDP + H(+). The enzyme catalyses a neolactoside nLc4Cer + GDP-beta-L-fucose = a neolactoside III(3)-alpha-Fuc-nLc4Cer + GDP + H(+). It carries out the reaction an N-acetyl-alpha-neuraminyl-(2-&gt;3)-beta-D-galactosyl-(1-&gt;4)-N-acetyl-beta-D-glucosaminyl derivative + GDP-beta-L-fucose = an alpha-Neu5Ac-(2-&gt;3)-beta-D-Gal-(1-&gt;4)-[alpha-L-Fuc-(1-&gt;3)]-beta-D-GlcNAc derivative + GDP + H(+). The catalysed reaction is beta-D-Gal-(1-&gt;4)-beta-D-GlcNAc-(1-&gt;3)-beta-D-Gal-(1-&gt;4)-D-Glc + GDP-beta-L-fucose = beta-D-Gal-(1-&gt;4)-[alpha-L-Fuc-(1-&gt;3)]-beta-D-GlcNAc-(1-&gt;3)-beta-D-Gal-(1-&gt;4)-D-Glc + GDP + H(+). It catalyses the reaction an alpha-L-Fuc-(1-&gt;2)-beta-D-Gal-(1-&gt;4)-beta-D-GlcNAc derivative + GDP-beta-L-fucose = an alpha-L-Fuc-(1-&gt;2)-beta-D-Gal-(1-&gt;4)-[alpha-L-Fuc-(1-&gt;3)]-beta-D-GlcNAc derivative + GDP + H(+). It functions in the pathway protein modification; protein glycosylation. Its pathway is glycolipid biosynthesis. Its activity is regulated as follows. Activated by Mn2+. Functionally, catalyzes alpha(1-&gt;3) linkage of fucosyl moiety transferred from GDP-beta-L-fucose to N-acetyl glucosamine (GlcNAc) within type 2 lactosamine (LacNAc, beta-D-Gal-(1-&gt;4)-beta-D-GlcNAc-) glycan attached to glycolipids and N- or O-linked glycoproteins. Fucosylates distal type 2 LacNAc and its fucosylated (H-type 2 LacNAc) and sialylated (sialyl-type 2 LacNAc) derivatives to form Lewis x (Lex) (CD15) and Lewis y (Ley) antigenic epitopes involved in cell adhesion and differentiation. Generates Lex epitopes in the brain, presumably playing a role in the maintenance of neuronal stemness and neurite outgrowth in progenitor neural cells. Fucosylates the internal type 2 LacNAc unit of the polylactosamine chain to form VIM-2 antigen that serves as recognition epitope for SELE. Can also modify milk oligosaccharides in particular type 2 tetrasaccharide LNnT. This is 4-galactosyl-N-acetylglucosaminide 3-alpha-L-fucosyltransferase 9 from Bos taurus (Bovine).